The sequence spans 444 residues: Glutamyl-tRNA reductase (444 aa).

Residues 49–52 (TCNR), serine 109, 114–116 (ETQ), and glutamine 120 each bind substrate. Cysteine 50 (nucleophile) is an active-site residue. 189–194 (GAGKMG) is an NADP(+) binding site.

This sequence belongs to the glutamyl-tRNA reductase family. As to quaternary structure, homodimer.

The catalysed reaction is (S)-4-amino-5-oxopentanoate + tRNA(Glu) + NADP(+) = L-glutamyl-tRNA(Glu) + NADPH + H(+). It participates in porphyrin-containing compound metabolism; protoporphyrin-IX biosynthesis; 5-aminolevulinate from L-glutamyl-tRNA(Glu): step 1/2. Functionally, catalyzes the NADPH-dependent reduction of glutamyl-tRNA(Glu) to glutamate 1-semialdehyde (GSA). The protein is Glutamyl-tRNA reductase of Bacillus cereus (strain AH187).